Reading from the N-terminus, the 522-residue chain is AAA ATPase forming ring-shaped complexes (522 aa).

The disordered stretch occupies residues 1–26 (MGQEKHTDAASQSRDPEAVAAHENDQ). Residues 20–57 (AAHENDQLRQRNHALAKALTRATEELRKAKAQLEQFMA) adopt a coiled-coil conformation. 248-253 (GNGKTL) is a binding site for ATP.

The protein belongs to the AAA ATPase family. In terms of assembly, homohexamer. Assembles into a hexameric ring structure.

The sequence is that of AAA ATPase forming ring-shaped complexes from Bifidobacterium animalis subsp. lactis (strain AD011).